A 210-amino-acid chain; its full sequence is Ras-related protein Rab-2-B (210 aa).

Residue 13-21 coordinates GTP; that stretch reads GDTGVGKSC. The short motif at 35-43 is the Effector region element; it reads HDLTIGVEF. GTP contacts are provided by residues 61–65, 119–122, and 149–151; these read DTAGQ, NKCD, and SAK. 2 S-geranylgeranyl cysteine lipidation sites follow: cysteine 208 and cysteine 209.

The protein belongs to the small GTPase superfamily. Rab family.

The protein localises to the endoplasmic reticulum membrane. The protein resides in the golgi apparatus membrane. Its function is as follows. Protein transport. Probably involved in vesicular traffic. The sequence is that of Ras-related protein Rab-2-B (RAB2B) from Zea mays (Maize).